A 107-amino-acid polypeptide reads, in one-letter code: Guanine nucleotide-binding protein G(I)/G(S)/G(O) subunit gamma-14 (107 aa).

A G protein gamma domain is found at 69 to 107 (KMAADLLKFCTEQAKNDPFLVGIPAATNSFKEKKPYAIL).

This sequence belongs to the G protein gamma family. In terms of assembly, g proteins are composed of 3 units; alpha, beta and gamma.

It localises to the cell membrane. In terms of biological role, guanine nucleotide-binding proteins (G proteins) are involved as a modulator or transducer in various transmembrane signaling systems. The beta and gamma chains are required for the GTPase activity, for replacement of GDP by GTP, and for G protein-effector interaction. This chain is Guanine nucleotide-binding protein G(I)/G(S)/G(O) subunit gamma-14, found in Homo sapiens (Human).